The primary structure comprises 523 residues: REST corepressor 2 (523 aa).

The interval 1–43 (MPSVMEKPSAGSGILSRSRAKTAPNGGQPHSEDDSSEEEHSHD) is disordered. The span at 30 to 43 (HSEDDSSEEEHSHD) shows a compositional bias: basic and acidic residues. Ser31, Ser35, Ser36, and Ser63 each carry phosphoserine. An ELM2 domain is found at 44–129 (SMIRVGTNYQ…KSLADLANFT (86 aa)). A Glycyl lysine isopeptide (Lys-Gly) (interchain with G-Cter in SUMO2) cross-link involves residue Lys88. The 52-residue stretch at 130–181 (PFPDEWTVEDKVLFEQAFGFHGKCFQRIQQMLPDKLIPSLVKYYYSWKKTRS) folds into the SANT 1 domain. The interval 185–265 (VMDRQARRLG…RRRPPKGMYL (81 aa)) is disordered. Phosphoserine is present on Ser202. A compositionally biased stretch (basic residues) spans 248–260 (YRHHPLRTRRRPP). Positions 283–314 (TLRGLDSQLISLKRQVQSMKQTNSSLRQALEG) form a coiled coil. Residues 327 to 378 (KFNSRWTTDEQLLAVQAIRRYGKDFGAIAEVIGNKTLTQVKTFFVSYRRRFN) enclose the SANT 2 domain. Positions 387–523 (EAEQDGAPTA…AQLEPPAPSL (137 aa)) are disordered. Residues 432 to 459 (SVPPAPPPPPPPTSLSQPPPLLRPPLPT) show a composition bias toward pro residues. The span at 460-482 (APTLLRQPPPLQQGRFLQPRLAP) shows a compositional bias: low complexity. Arg479 carries the post-translational modification Asymmetric dimethylarginine.

Belongs to the CoREST family.

The protein resides in the nucleus. May act as a component of a corepressor complex that represses transcription. This Rattus norvegicus (Rat) protein is REST corepressor 2 (Rcor2).